The chain runs to 780 residues: Tricorn protease-interacting factor F3 (780 aa).

Substrate is bound by residues E101 and 230–234 (GAMEN). H265 is a binding site for Zn(2+). E266 (proton acceptor) is an active-site residue. Zn(2+) contacts are provided by H269 and E288.

Belongs to the peptidase M1 family. As to quaternary structure, part of the tricorn proteolytic complex. Zn(2+) is required as a cofactor.

The protein resides in the cytoplasm. In terms of biological role, proteases F1, F2 and F3 degrade oligopeptides produced by Tricorn (themselves probably produced by the proteasome), yielding free amino acids. This chain is Tricorn protease-interacting factor F3 (trf3), found in Thermoplasma acidophilum (strain ATCC 25905 / DSM 1728 / JCM 9062 / NBRC 15155 / AMRC-C165).